The chain runs to 266 residues: 3-methyl-2-oxobutanoate hydroxymethyltransferase (266 aa).

Asp45 and Asp84 together coordinate Mg(2+). Residues 45–46 (DS), Asp84, and Lys112 contribute to the 3-methyl-2-oxobutanoate site. Glu114 is a Mg(2+) binding site. Glu181 acts as the Proton acceptor in catalysis.

The protein belongs to the PanB family. As to quaternary structure, homodecamer; pentamer of dimers. The cofactor is Mg(2+).

It is found in the cytoplasm. The catalysed reaction is 3-methyl-2-oxobutanoate + (6R)-5,10-methylene-5,6,7,8-tetrahydrofolate + H2O = 2-dehydropantoate + (6S)-5,6,7,8-tetrahydrofolate. It functions in the pathway cofactor biosynthesis; (R)-pantothenate biosynthesis; (R)-pantoate from 3-methyl-2-oxobutanoate: step 1/2. Its function is as follows. Catalyzes the reversible reaction in which hydroxymethyl group from 5,10-methylenetetrahydrofolate is transferred onto alpha-ketoisovalerate to form ketopantoate. The polypeptide is 3-methyl-2-oxobutanoate hydroxymethyltransferase (Pseudomonas savastanoi pv. phaseolicola (strain 1448A / Race 6) (Pseudomonas syringae pv. phaseolicola (strain 1448A / Race 6))).